Consider the following 1085-residue polypeptide: Ankyrin repeat and IBR domain-containing protein 1 (1085 aa).

G2 is lipidated: N-myristoyl glycine. ANK repeat units lie at residues 45–75 (QHNT…NPNK) and 145–174 (KKNT…DLFA). The segment at 282-322 (CQRSGVQMPTPPPSGYNAWDTLPSPRTPRTTRSSVTSPDEI) is disordered. The segment covering 304 to 319 (PSPRTPRTTRSSVTSP) has biased composition (low complexity). The segment at 330 to 570 (DTSLCDICMC…GGYYRCTRYE (241 aa)) is TRIAD supradomain. C334, C337, C352, H354, C357, C360, C379, C384, C466, C469, H474, C479, C520, and C523 together coordinate Zn(2+). The segment at 334 to 384 (CDICMCSISVFEDPVDMPCGHDFCRGCWEAFLNLKIQEGEAHNIFCPAYEC) adopts an RING-type 1 zinc-finger fold. The segment at 402–479 (DKRYLQFDIK…LGEAHEPCDC (78 aa)) adopts an IBR-type zinc-finger fold. The segment at 520-549 (CANCKSPIQKNEGCNHMQCAKCKYDFCWIC) adopts an RING-type 2; atypical zinc-finger fold. C533 is an active-site residue. The Zn(2+) site is built by C538, C541, C546, C549, H556, and C566. The stretch at 576–641 (EEQSKEMTVE…RALKETEGGC (66 aa)) forms a coiled coil. S738 bears the Phosphoserine mark. The disordered stretch occupies residues 764 to 808 (RRRHRQQRRRGDVHSLLSNPTDLDEPSESTFDLPEGSSGRRPGAS). A UIM domain is found at 846–865 (EDDPNILLAIQLSLQESGLD). Phosphoserine occurs at positions 879 and 906. Disordered regions lie at residues 884 to 907 (GSSL…ALSS), 921 to 959 (GADS…QDPS), and 1014 to 1085 (PPED…VHSV). The segment covering 926-959 (PFSTDTLSSRPLSETRSDFCPSSSDLDSAGQDPS) has biased composition (polar residues). The segment covering 1018–1033 (SVSKDTGVHEGERAQM) has biased composition (basic and acidic residues). Residues 1068 to 1085 (ASQTPQTSSDWLEQVHSV) show a composition bias toward polar residues.

It belongs to the RBR family.

The catalysed reaction is [E2 ubiquitin-conjugating enzyme]-S-ubiquitinyl-L-cysteine + [acceptor protein]-L-lysine = [E2 ubiquitin-conjugating enzyme]-L-cysteine + [acceptor protein]-N(6)-ubiquitinyl-L-lysine.. Its function is as follows. Might act as an E3 ubiquitin-protein ligase, or as part of E3 complex, which accepts ubiquitin from specific E2 ubiquitin-conjugating enzymes and then transfers it to substrates. The protein is Ankyrin repeat and IBR domain-containing protein 1 (Ankib1) of Mus musculus (Mouse).